The primary structure comprises 207 residues: Galactoside O-acetyltransferase (207 aa).

Position 87 (asparagine 87) interacts with acetyl-CoA. Histidine 117 (proton donor/acceptor) is an active-site residue. Acetyl-CoA is bound by residues alanine 144, alanine 162, 167 to 168 (TK), and arginine 185.

The protein belongs to the transferase hexapeptide repeat family. Homotrimer.

It localises to the cytoplasm. The catalysed reaction is a beta-D-galactoside + acetyl-CoA = a 6-acetyl-beta-D-galactoside + CoA. The protein is Galactoside O-acetyltransferase (lacA) of Lactococcus lactis subsp. lactis (strain IL1403) (Streptococcus lactis).